The following is a 154-amino-acid chain: Probable prefoldin subunit 5 (154 aa).

It belongs to the prefoldin subunit alpha family. As to quaternary structure, heterohexamer of two PFD-alpha type and four PFD-beta type subunits.

Binds specifically to cytosolic chaperonin (c-CPN) and transfers target proteins to it. Binds to nascent polypeptide chain and promotes folding in an environment in which there are many competing pathways for nonnative proteins. The polypeptide is Probable prefoldin subunit 5 (Caenorhabditis briggsae).